The following is a 290-amino-acid chain: Signal peptidase I (290 aa).

The Cytoplasmic portion of the chain corresponds to 1–13; it reads MKFLRSVYAFCSS. Residues 14–34 form a helical membrane-spanning segment; sequence WVGTIIIVLLVIFFIAQAFII. At 35–290 the chain is on the extracellular side; sequence PSRSMVGTLY…KIIKKEKATH (256 aa). Catalysis depends on residues S38 and K106.

Belongs to the peptidase S26 family.

The protein localises to the cell membrane. The enzyme catalyses Cleavage of hydrophobic, N-terminal signal or leader sequences from secreted and periplasmic proteins.. The polypeptide is Signal peptidase I (lepB) (Helicobacter pylori (strain J99 / ATCC 700824) (Campylobacter pylori J99)).